Reading from the N-terminus, the 101-residue chain is Integration host factor subunit beta (101 aa).

The interval 62–84 is disordered; it reads RNPKTGESVALPGKHVPHFKPGK.

This sequence belongs to the bacterial histone-like protein family. In terms of assembly, heterodimer of an alpha and a beta chain.

Its function is as follows. This protein is one of the two subunits of integration host factor, a specific DNA-binding protein that functions in genetic recombination as well as in transcriptional and translational control. In Stenotrophomonas maltophilia (strain K279a), this protein is Integration host factor subunit beta.